A 67-amino-acid polypeptide reads, in one-letter code: Large ribosomal subunit protein bL32 (67 aa).

Residues 1–20 are compositionally biased toward basic residues; the sequence is MAVPKRKMSRSNTRARRAKW. Residues 1–24 are disordered; the sequence is MAVPKRKMSRSNTRARRAKWKATA.

Belongs to the bacterial ribosomal protein bL32 family.

The protein is Large ribosomal subunit protein bL32 of Renibacterium salmoninarum (strain ATCC 33209 / DSM 20767 / JCM 11484 / NBRC 15589 / NCIMB 2235).